Reading from the N-terminus, the 294-residue chain is Large ribosomal subunit protein uL18B (294 aa).

The protein belongs to the universal ribosomal protein uL18 family. Component of the large ribosomal subunit (LSU). Mature yeast ribosomes consist of a small (40S) and a large (60S) subunit. The 40S small subunit contains 1 molecule of ribosomal RNA (18S rRNA) and 33 different proteins (encoded by 57 genes). The large 60S subunit contains 3 rRNA molecules (25S, 5.8S and 5S rRNA) and 46 different proteins (encoded by 81 genes). Component of a hexameric 5S RNP precursor complex, composed of 5S RNA, rrs1, rpf2, rpl5a/rpl5b, rpl11a/rpl11b and syo1; this complex acts as a precursor for ribosome assembly. rpl5a/rpl5b/uL18 forms a heterotrimeric complex with syo1 and rpl11a/rpl11b/uL5. Interaction of this complex with KAP104 allows the nuclear import of the heterotrimer.

Its subcellular location is the cytoplasm. The protein localises to the nucleus. Functionally, component of the ribosome, a large ribonucleoprotein complex responsible for the synthesis of proteins in the cell. The small ribosomal subunit (SSU) binds messenger RNAs (mRNAs) and translates the encoded message by selecting cognate aminoacyl-transfer RNA (tRNA) molecules. The large subunit (LSU) contains the ribosomal catalytic site termed the peptidyl transferase center (PTC), which catalyzes the formation of peptide bonds, thereby polymerizing the amino acids delivered by tRNAs into a polypeptide chain. The nascent polypeptides leave the ribosome through a tunnel in the LSU and interact with protein factors that function in enzymatic processing, targeting, and the membrane insertion of nascent chains at the exit of the ribosomal tunnel. This Schizosaccharomyces pombe (strain 972 / ATCC 24843) (Fission yeast) protein is Large ribosomal subunit protein uL18B (rpl502).